A 209-amino-acid chain; its full sequence is Uracil phosphoribosyltransferase (209 aa).

5-phospho-alpha-D-ribose 1-diphosphate contacts are provided by residues arginine 79, arginine 104, and 131–139 (DPMLATGGS). Residues isoleucine 194 and 199–201 (GDA) contribute to the uracil site. Aspartate 200 contributes to the 5-phospho-alpha-D-ribose 1-diphosphate binding site.

The protein belongs to the UPRTase family. It depends on Mg(2+) as a cofactor.

The catalysed reaction is UMP + diphosphate = 5-phospho-alpha-D-ribose 1-diphosphate + uracil. It participates in pyrimidine metabolism; UMP biosynthesis via salvage pathway; UMP from uracil: step 1/1. Allosterically activated by GTP. Catalyzes the conversion of uracil and 5-phospho-alpha-D-ribose 1-diphosphate (PRPP) to UMP and diphosphate. This chain is Uracil phosphoribosyltransferase, found in Anoxybacillus flavithermus (strain DSM 21510 / WK1).